A 129-amino-acid polypeptide reads, in one-letter code: MKKGNVRTLDGIIYSLFIFMTIVTLFIIYRDIPSNAVLNFVTAYAIFAILIPLYILVRVLFTVKHFTFEEVKKEGVKFLMFFIGIMMLNLVGDFLLPLPDLKLSKMLPSSLGFAFGITCFDIVLSKRTK.

This is an uncharacterized protein from Clostridium perfringens (strain 13 / Type A).